Consider the following 260-residue polypeptide: Kallikrein-8 (260 aa).

A signal peptide spans 1 to 28; the sequence is MGRPPPCAIQPWILLLLFMGAWAGLTRA. Residues 29–32 constitute a propeptide that is removed on maturation; that stretch reads QGSK. The Peptidase S1 domain maps to 33–257; it reads ILEGRECIPH…YTTWIKKTMD (225 aa). Disulfide bonds link Cys39-Cys173, Cys58-Cys74, Cys145-Cys246, Cys152-Cys218, Cys184-Cys198, and Cys208-Cys233. The active-site Charge relay system is the His73. An N-linked (GlcNAc...) asparagine glycan is attached at Asn110. Residue Asp120 is the Charge relay system of the active site. Residue Ser212 is the Charge relay system of the active site.

Belongs to the peptidase S1 family. Kallikrein subfamily. As to quaternary structure, interacts with SPINK9. As to expression, expressed in the limbic system of mouse brain and is localized at highest concentration in pyramidal neurons of the hippocampal CA1-3 subfields. Also detected in spinal cord gray matter and in keratinized stratified epithelia of epidermis, hair, tongue, palate, nasal cavity, pharynges, esophagus and forestomach. In skin and mucus membranes, expressed in stratum spinosum and stratum granulosum. Expressed during estrus in vaginal epithelial cells but not stromal cells. Within the vaginal epithelium, expressed in prickle cells, granular cells and parakeratotic cells but not in basal cells. Not expressed in uterus. Expressed in the keratinocytes.

It is found in the secreted. The protein localises to the cytoplasm. It catalyses the reaction Cleavage of amide substrates following the basic amino acids Arg or Lys at the P1 position, with a preference for Arg over Lys.. With respect to regulation, strongly inhibited by diisopropyl fluorophosphate, leupeptin and (4-amidinophenyl)methanesulfonyl 1-fluoride. Its function is as follows. Serine protease which is capable of degrading a number of proteins such as casein, fibrinogen, kininogen, fibronectin and collagen type IV. Also cleaves L1CAM in response to increased neural activity. Induces neurite outgrowth and fasciculation of cultured hippocampal neurons. Plays a role in the formation and maturation of orphan and small synaptic boutons in the Schaffer-collateral pathway, regulates Schaffer-collateral long-term potentiation in the hippocampus and is required for memory acquisition and synaptic plasticity. Involved in skin desquamation and keratinocyte proliferation. Plays a role in the secondary phase of pathogenesis following spinal cord injury. The polypeptide is Kallikrein-8 (Klk8) (Mus musculus (Mouse)).